The primary structure comprises 378 residues: Myoglobin (378 aa).

Alanine 2 carries the blocked amino end (Ala) modification. Residue histidine 332 coordinates heme.

Belongs to the indoleamine 2,3-dioxygenase family. As to quaternary structure, homodimer. The cofactor is heme.

In terms of biological role, serves a reserve supply of oxygen and facilitates the movement of oxygen within muscles. This Haliotis diversicolor (Abalone) protein is Myoglobin.